Consider the following 257-residue polypeptide: Na(+)-translocating NADH-quinone reductase subunit C (257 aa).

A helical transmembrane segment spans residues 12–32; that stretch reads LFVVIALSLVCSIIVSAAAVG. At T225 the chain carries FMN phosphoryl threonine.

It belongs to the NqrC family. In terms of assembly, composed of six subunits; NqrA, NqrB, NqrC, NqrD, NqrE and NqrF. The cofactor is FMN.

It localises to the cell inner membrane. The enzyme catalyses a ubiquinone + n Na(+)(in) + NADH + H(+) = a ubiquinol + n Na(+)(out) + NAD(+). NQR complex catalyzes the reduction of ubiquinone-1 to ubiquinol by two successive reactions, coupled with the transport of Na(+) ions from the cytoplasm to the periplasm. NqrA to NqrE are probably involved in the second step, the conversion of ubisemiquinone to ubiquinol. This is Na(+)-translocating NADH-quinone reductase subunit C from Vibrio cholerae serotype O1 (strain ATCC 39541 / Classical Ogawa 395 / O395).